The chain runs to 329 residues: Aspartate carbamoyltransferase catalytic subunit (329 aa).

Positions 66 and 67 each coordinate carbamoyl phosphate. Lys-94 contributes to the L-aspartate binding site. Positions 116, 149, and 152 each coordinate carbamoyl phosphate. L-aspartate is bound by residues Arg-189 and Arg-243. 2 residues coordinate carbamoyl phosphate: Gly-284 and Pro-285.

This sequence belongs to the aspartate/ornithine carbamoyltransferase superfamily. ATCase family. As to quaternary structure, heterododecamer (2C3:3R2) of six catalytic PyrB chains organized as two trimers (C3), and six regulatory PyrI chains organized as three dimers (R2).

It catalyses the reaction carbamoyl phosphate + L-aspartate = N-carbamoyl-L-aspartate + phosphate + H(+). Its pathway is pyrimidine metabolism; UMP biosynthesis via de novo pathway; (S)-dihydroorotate from bicarbonate: step 2/3. Its function is as follows. Catalyzes the condensation of carbamoyl phosphate and aspartate to form carbamoyl aspartate and inorganic phosphate, the committed step in the de novo pyrimidine nucleotide biosynthesis pathway. In Gloeobacter violaceus (strain ATCC 29082 / PCC 7421), this protein is Aspartate carbamoyltransferase catalytic subunit.